A 226-amino-acid chain; its full sequence is NADH-ubiquinone oxidoreductase chain 6 (226 aa).

5 consecutive transmembrane segments (helical) span residues 2–22 (STLGLLLILLGIIITCTFVIL), 28–48 (IYSILNLIVIYGCYASILLTV), 56–76 (IYILVNVGAIAVLFLFIVMMI), 90–110 (YNIYMFVGFIGLIGIMGILIT), and 169–189 (IWFIMACIILLIGMVGVIYIT).

It belongs to the complex I subunit 6 family.

Its subcellular location is the mitochondrion membrane. It carries out the reaction a ubiquinone + NADH + 5 H(+)(in) = a ubiquinol + NAD(+) + 4 H(+)(out). Functionally, core subunit of the mitochondrial membrane respiratory chain NADH dehydrogenase (Complex I) that is believed to belong to the minimal assembly required for catalysis. Complex I functions in the transfer of electrons from NADH to the respiratory chain. The immediate electron acceptor for the enzyme is believed to be ubiquinone. The sequence is that of NADH-ubiquinone oxidoreductase chain 6 (nad6) from Dictyostelium citrinum (Slime mold).